We begin with the raw amino-acid sequence, 218 residues long: Adenylate kinase (218 aa).

10–15 (GAGKGT) is an ATP binding site. Residues 30–59 (STGDMLRAAVKAGTPLGQQAKAVMDAGQLV) form an NMP region. Residues Thr-31, Arg-36, 57–59 (QLV), 85–88 (GFPR), and Gln-92 each bind AMP. Residues 122–159 (GRRSHPASGRTYHVKFNPPKVEGQDDVTGEPLVQREDD) are LID. Residues Arg-123 and 132-133 (TY) each bind ATP. The segment at 127–151 (PASGRTYHVKFNPPKVEGQDDVTGE) is disordered. Residues Arg-156 and Arg-167 each coordinate AMP. Gly-203 contacts ATP.

It belongs to the adenylate kinase family. In terms of assembly, monomer.

It localises to the cytoplasm. It catalyses the reaction AMP + ATP = 2 ADP. It functions in the pathway purine metabolism; AMP biosynthesis via salvage pathway; AMP from ADP: step 1/1. Its function is as follows. Catalyzes the reversible transfer of the terminal phosphate group between ATP and AMP. Plays an important role in cellular energy homeostasis and in adenine nucleotide metabolism. The polypeptide is Adenylate kinase (Delftia acidovorans (strain DSM 14801 / SPH-1)).